Consider the following 307-residue polypeptide: Serine/threonine-protein phosphatase 4 catalytic subunit (307 aa).

Residues aspartate 54, histidine 56, aspartate 82, and asparagine 114 each contribute to the Mn(2+) site. The Proton donor role is filled by histidine 115. Positions 164 and 238 each coordinate Mn(2+). Leucine 307 bears the Leucine methyl ester mark.

This sequence belongs to the PPP phosphatase family. PP-4 (PP-X) subfamily. Serine/threonine-protein phosphatase 4 (PP4) occurs in different assemblies of the catalytic and one or more regulatory subunits. The cofactor is Mn(2+).

It is found in the cytoplasm. The protein resides in the nucleus. Its subcellular location is the cytoskeleton. It localises to the microtubule organizing center. The protein localises to the centrosome. The catalysed reaction is O-phospho-L-seryl-[protein] + H2O = L-seryl-[protein] + phosphate. It catalyses the reaction O-phospho-L-threonyl-[protein] + H2O = L-threonyl-[protein] + phosphate. Functionally, protein phosphatase that regulates many processes such as microtubule organization at centrosomes. The polypeptide is Serine/threonine-protein phosphatase 4 catalytic subunit (ppp4c) (Xenopus laevis (African clawed frog)).